Reading from the N-terminus, the 307-residue chain is Protoheme IX farnesyltransferase (307 aa).

A run of 9 helical transmembrane segments spans residues 31 to 51 (VMSLVIFTCFVGMLLAPYSVH), 52 to 72 (PFIASIAVVCIAFGAGSAGAI), 102 to 119 (ALSFGLITGFFAVFFMAL), 123 to 145 (LLASFLLLFTIFYYICIYTIWLK), 151 to 171 (NIVIGGVSGALPPVIGYAAVS), 179 to 199 (VILFLIILIWTPPHSWALALF), 225 to 245 (ILIYSFLLFIVSLMPFFIGMS), 247 to 267 (FIYLIISGILGLVFLYYAGSL), and 281 to 301 (FVYSIFYLFFIFLLLYLTNTI).

The protein belongs to the UbiA prenyltransferase family. Protoheme IX farnesyltransferase subfamily.

It localises to the cell inner membrane. It carries out the reaction heme b + (2E,6E)-farnesyl diphosphate + H2O = Fe(II)-heme o + diphosphate. It participates in porphyrin-containing compound metabolism; heme O biosynthesis; heme O from protoheme: step 1/1. Functionally, converts heme B (protoheme IX) to heme O by substitution of the vinyl group on carbon 2 of heme B porphyrin ring with a hydroxyethyl farnesyl side group. The chain is Protoheme IX farnesyltransferase from Rickettsia canadensis (strain McKiel).